The primary structure comprises 609 residues: WD repeat-containing protein 1 (609 aa).

WD repeat units follow at residues glutamate 6–isoleucine 47, proline 50–threonine 89, leucine 95–serine 137, serine 140–glycine 178, lysine 182–glycine 220, valine 226–valine 265, serine 272–lysine 308, lysine 313–serine 353, glycine 360–valine 410, methionine 434–isoleucine 476, lysine 482–valine 520, valine 525–valine 563, and threonine 568–isoleucine 606.

This sequence belongs to the WD repeat AIP1 family.

The protein localises to the cytoplasm. It is found in the cytoskeleton. Functionally, induces disassembly of actin filaments in conjunction with ADF/cofilin family proteins. Enhances cofilin-mediated actin severing. The polypeptide is WD repeat-containing protein 1 (WDR1) (Gallus gallus (Chicken)).